The primary structure comprises 334 residues: Aspartate carbamoyltransferase catalytic subunit (334 aa).

2 residues coordinate carbamoyl phosphate: Arg71 and Thr72. Position 99 (Lys99) interacts with L-aspartate. Carbamoyl phosphate-binding residues include Arg121, His151, and Gln154. 2 residues coordinate L-aspartate: Arg184 and Arg239. Carbamoyl phosphate contacts are provided by Gly280 and Pro281.

The protein belongs to the aspartate/ornithine carbamoyltransferase superfamily. ATCase family. As to quaternary structure, heterododecamer (2C3:3R2) of six catalytic PyrB chains organized as two trimers (C3), and six regulatory PyrI chains organized as three dimers (R2).

It catalyses the reaction carbamoyl phosphate + L-aspartate = N-carbamoyl-L-aspartate + phosphate + H(+). Its pathway is pyrimidine metabolism; UMP biosynthesis via de novo pathway; (S)-dihydroorotate from bicarbonate: step 2/3. Catalyzes the condensation of carbamoyl phosphate and aspartate to form carbamoyl aspartate and inorganic phosphate, the committed step in the de novo pyrimidine nucleotide biosynthesis pathway. In Pseudomonas putida (Arthrobacter siderocapsulatus), this protein is Aspartate carbamoyltransferase catalytic subunit.